Reading from the N-terminus, the 429-residue chain is Keratin, type I cytoskeletal 47 kDa (429 aa).

The span at methionine 1–serine 16 shows a compositional bias: low complexity. Residues methionine 1–glycine 20 form a disordered region. Residues methionine 1–asparagine 69 form a head region. A coil 1A region spans residues glutamate 70–tryptophan 105. One can recognise an IF rod domain in the interval glutamate 70–valine 385. Residues tyrosine 106 to isoleucine 127 form a linker 1 region. A coil 1B region spans residues isoleucine 128–alanine 219. The linker 12 stretch occupies residues lysine 220–isoleucine 242. Residues leucine 243–glutamate 381 form a coil 2 region. The tail stretch occupies residues leucine 382–glutamate 429. Positions alanine 389 to threonine 408 are disordered. Residues threonine 391 to threonine 408 are compositionally biased toward low complexity.

This sequence belongs to the intermediate filament family. Heterotetramer of two type I and two type II keratins.

The sequence is that of Keratin, type I cytoskeletal 47 kDa (xk81a1) from Xenopus laevis (African clawed frog).